Consider the following 67-residue polypeptide: Probable Sec-independent protein translocase protein TatE (67 aa).

The helical transmembrane segment at 1–21 (MGEISITKLLVVAALVVLLFG) threads the bilayer. Positions 45–67 (DEDAGAKKDANGDLPAEKLTHKE) are disordered.

The protein belongs to the TatA/E family. TatE subfamily.

The protein localises to the cell inner membrane. Part of the twin-arginine translocation (Tat) system that transports large folded proteins containing a characteristic twin-arginine motif in their signal peptide across membranes. TatE shares overlapping functions with TatA. This is Probable Sec-independent protein translocase protein TatE from Escherichia fergusonii (strain ATCC 35469 / DSM 13698 / CCUG 18766 / IAM 14443 / JCM 21226 / LMG 7866 / NBRC 102419 / NCTC 12128 / CDC 0568-73).